The primary structure comprises 568 residues: Periplasmic trehalase (568 aa).

Residues 1–38 (MPHAPARSGDAMSAAAPPCCTSLLGLSLSMFVAPCALA) form the signal peptide. Residues R169, 176 to 177 (WD), N213, 222 to 224 (RSQ), 294 to 296 (RPE), and G327 contribute to the substrate site. Residues D329 and E511 each act as proton donor/acceptor in the active site. A substrate-binding site is contributed by E526.

It belongs to the glycosyl hydrolase 37 family.

It is found in the periplasm. It catalyses the reaction alpha,alpha-trehalose + H2O = alpha-D-glucose + beta-D-glucose. Provides the cells with the ability to utilize trehalose at high osmolarity by splitting it into glucose molecules that can subsequently be taken up by the phosphotransferase-mediated uptake system. The chain is Periplasmic trehalase from Xanthomonas campestris pv. campestris (strain B100).